Consider the following 516-residue polypeptide: Polyprenol-phosphate-mannose--protein mannosyltransferase (516 aa).

The span at 1–11 (MTALDTDTPTA) shows a compositional bias: polar residues. The tract at residues 1 to 23 (MTALDTDTPTAGRSAPLISPGPV) is disordered. 9 helical membrane passes run 113–133 (YNGL…VMLV), 143–163 (STLV…SFVS), 166–186 (TALL…CLMV), 234–254 (WSGL…DAIA), 275–295 (AAYV…APWF), 384–404 (VMLV…GWAL), 413–433 (WRYG…FADI), 437–457 (MYFF…ALIL), and 473–493 (LGLL…AWMY).

This sequence belongs to the glycosyltransferase 39 family.

It is found in the cell membrane. It participates in protein modification; protein glycosylation. Protein O-mannosyltransferase that catalyzes the transfer of a single mannose residue from a polyprenol phospho-mannosyl lipidic donor to the hydroxyl group of selected serine and threonine residues in acceptor proteins. Involved in DNA conjugation, in at least the recipient strain. This Mycolicibacterium smegmatis (strain MKD8) (Mycobacterium smegmatis) protein is Polyprenol-phosphate-mannose--protein mannosyltransferase (pmt).